The following is a 706-amino-acid chain: Methionine--tRNA ligase (706 aa).

The 'HIGH' region signature appears at 13-23 (PYANGSIHLGH). Residues cysteine 144, cysteine 147, cysteine 157, and cysteine 160 each coordinate Zn(2+). The 'KMSKS' region motif lies at 336 to 340 (KMSKS). Lysine 339 contacts ATP. Residues 570 to 593 (QQTMNTETESHSPQRHGQAQQHPV) are disordered. Positions 604–706 (DFVKIDLRIA…SGAQPGMRVK (103 aa)) constitute a tRNA-binding domain.

Belongs to the class-I aminoacyl-tRNA synthetase family. MetG type 1 subfamily. In terms of assembly, homodimer. It depends on Zn(2+) as a cofactor.

The protein localises to the cytoplasm. It catalyses the reaction tRNA(Met) + L-methionine + ATP = L-methionyl-tRNA(Met) + AMP + diphosphate. Functionally, is required not only for elongation of protein synthesis but also for the initiation of all mRNA translation through initiator tRNA(fMet) aminoacylation. The sequence is that of Methionine--tRNA ligase from Nitrosomonas europaea (strain ATCC 19718 / CIP 103999 / KCTC 2705 / NBRC 14298).